Here is a 262-residue protein sequence, read N- to C-terminus: Putative ABC transporter ATP-binding protein SAV_3608 (262 aa).

The 231-residue stretch at 18–248 (LDVAGLAFAY…DTLMRAHRLE (231 aa)) folds into the ABC transporter domain. Residue 51-58 (GPNGAGKT) coordinates ATP.

It belongs to the ABC transporter superfamily.

The protein localises to the cell membrane. Functionally, probably part of an ABC transporter complex. Responsible for energy coupling to the transport system. The chain is Putative ABC transporter ATP-binding protein SAV_3608 from Streptomyces avermitilis (strain ATCC 31267 / DSM 46492 / JCM 5070 / NBRC 14893 / NCIMB 12804 / NRRL 8165 / MA-4680).